A 358-amino-acid chain; its full sequence is Molybdenum import ATP-binding protein ModC 2 (358 aa).

The region spanning 1-234 (MPEQGIEAQL…PRLPLNHPDE (234 aa)) is the ABC transporter domain. 35-42 (GRSGSGKT) is a binding site for ATP. The Mop domain occupies 293 to 358 (NSSILNILRV…AQIKSVALME (66 aa)).

Belongs to the ABC transporter superfamily. Molybdate importer (TC 3.A.1.8) family. As to quaternary structure, the complex is composed of two ATP-binding proteins (ModC), two transmembrane proteins (ModB) and a solute-binding protein (ModA).

The protein localises to the cell inner membrane. The catalysed reaction is molybdate(out) + ATP + H2O = molybdate(in) + ADP + phosphate + H(+). In terms of biological role, part of the ABC transporter complex ModABC involved in molybdenum import. Responsible for energy coupling to the transport system. In Azotobacter vinelandii, this protein is Molybdenum import ATP-binding protein ModC 2.